The primary structure comprises 382 residues: uncharacterized protein (382 aa).

12 helical membrane-spanning segments follow: residues 14–34 (GLLL…LWLA), 45–65 (VVSS…GYVI), 79–99 (FIFA…SWLA), 102–122 (FVAG…LMCS), 131–151 (LLAA…LLVS), 157–177 (LMSV…PLLF), 204–224 (LGVN…GLMP), 235–255 (ASIG…QWPI), 270–290 (VQVF…AMAP), 291–311 (ALFI…AWAC), 325–345 (ALLL…AMLM), and 348–368 (FSDN…LLML).

It belongs to the major facilitator superfamily. YcaD (TC 2.A.1.26) family.

Its subcellular location is the cell inner membrane. This is an uncharacterized protein from Escherichia coli (strain K12 / MC4100 / BW2952).